The following is a 159-amino-acid chain: Ribosomal RNA large subunit methyltransferase H (159 aa).

Residues Leu-76, Gly-108, and 127–132 (FGKLTM) contribute to the S-adenosyl-L-methionine site.

The protein belongs to the RNA methyltransferase RlmH family. In terms of assembly, homodimer.

It localises to the cytoplasm. It catalyses the reaction pseudouridine(1915) in 23S rRNA + S-adenosyl-L-methionine = N(3)-methylpseudouridine(1915) in 23S rRNA + S-adenosyl-L-homocysteine + H(+). Its function is as follows. Specifically methylates the pseudouridine at position 1915 (m3Psi1915) in 23S rRNA. This chain is Ribosomal RNA large subunit methyltransferase H, found in Lactobacillus delbrueckii subsp. bulgaricus (strain ATCC 11842 / DSM 20081 / BCRC 10696 / JCM 1002 / NBRC 13953 / NCIMB 11778 / NCTC 12712 / WDCM 00102 / Lb 14).